A 540-amino-acid polypeptide reads, in one-letter code: Protein SOSEKI 3 (540 aa).

Residues 32–123 (KKVQIVYYLS…YVLKGSELFD (92 aa)) form a DIX-like oligomerization domain region. Disordered stretches follow at residues 147–201 (EPPS…DAKN) and 219–294 (ADAS…SSLG). Low complexity-rich tracts occupy residues 150–163 (SSRS…SSSM) and 185–194 (RSVSSSGVSP). Residues 221–244 (ASTQTDETVSGRSKTPIETFSRGV) show a composition bias toward polar residues. Residues 246-256 (TDEDVSSEPET) show a composition bias toward acidic residues. Positions 280-292 (NSVSPPFSNSASS) are enriched in low complexity. Residues 342–343 (CG) carry the Association to cell membranes motif. The interval 412-492 (KKDAADSNAS…KNIPCTTKTH (81 aa)) is disordered. The span at 418–437 (SNASLKRSSSYNGDRASNQM) shows a compositional bias: polar residues. The segment covering 471–482 (SEKRRDSSEDTT) has biased composition (basic and acidic residues).

It belongs to the SOSEKI family. In terms of assembly, homodimer. Forms long polymer filaments with other SOKs proteins polymers (e.g. SOK1, SOK2, SOK3 and SOK4) crucial for polar localization and biological activity. Binds to ANGUSTIFOLIA (AN). Expressed during embryogenesis and in roots.

It is found in the cell membrane. Functionally, SOSEKI proteins (SOK1-5) locally interpret global polarity cues and can influence cell division orientation to coordinate cell polarization relative to body axes, probably by guiding ANGUSTIFOLIA (AN) polarized localization. The polypeptide is Protein SOSEKI 3 (Arabidopsis thaliana (Mouse-ear cress)).